An 867-amino-acid chain; its full sequence is FO synthase (867 aa).

The interval 1 to 22 is disordered; it reads MTTSATSGTGPADPAGPTENSM. Radical SAM core domains are found at residues 75-325 and 534-769; these read ITYS…LQAP and VTYI…LLHP. The tract at residues 76 to 407 is cofG-like; the sequence is TYSKSVFVPL…PRLRPHVAAL (332 aa). [4Fe-4S] cluster is bound by residues C89, C93, C96, C548, C552, and C555. Residues 511 to 844 form a cofH-like region; that stretch reads EGPALDALCG…KPRTTLYGPV (334 aa). The segment at 835–867 is disordered; it reads KPRTTLYGPVPEERQRAARDSDGHLPELLPVLD. Residues 845–859 show a composition bias toward basic and acidic residues; sequence PEERQRAARDSDGHL.

The protein in the N-terminal section; belongs to the radical SAM superfamily. CofG family. It in the C-terminal section; belongs to the radical SAM superfamily. CofH family. The cofactor is [4Fe-4S] cluster.

It catalyses the reaction 5-amino-6-(D-ribitylamino)uracil + L-tyrosine + S-adenosyl-L-methionine = 5-amino-5-(4-hydroxybenzyl)-6-(D-ribitylimino)-5,6-dihydrouracil + 2-iminoacetate + 5'-deoxyadenosine + L-methionine + H(+). The catalysed reaction is 5-amino-5-(4-hydroxybenzyl)-6-(D-ribitylimino)-5,6-dihydrouracil + S-adenosyl-L-methionine = 7,8-didemethyl-8-hydroxy-5-deazariboflavin + 5'-deoxyadenosine + L-methionine + NH4(+) + H(+). It functions in the pathway cofactor biosynthesis; coenzyme F0 biosynthesis. In terms of biological role, catalyzes the radical-mediated synthesis of 7,8-didemethyl-8-hydroxy-5-deazariboflavin (FO) from 5-amino-6-(D-ribitylamino)uracil and L-tyrosine. This is FO synthase (fbiC) from Streptomyces coelicolor (strain ATCC BAA-471 / A3(2) / M145).